The chain runs to 215 residues: Cytochrome b6 (215 aa).

Residues 32–52 form a helical membrane-spanning segment; that stretch reads IFYCLGGITLTCFLVQVATGF. Residue C35 coordinates heme c. Heme b contacts are provided by H86 and H100. 3 helical membrane passes run 90-110, 116-136, and 186-206; these read ASMM…TGGF, LTWV…VTGY, and LHTF…FLMI. 2 residues coordinate heme b: H187 and H202.

Belongs to the cytochrome b family. PetB subfamily. As to quaternary structure, the 4 large subunits of the cytochrome b6-f complex are cytochrome b6, subunit IV (17 kDa polypeptide, PetD), cytochrome f and the Rieske protein, while the 4 small subunits are PetG, PetL, PetM and PetN. The complex functions as a dimer. Requires heme b as cofactor. Heme c serves as cofactor.

It is found in the plastid. It localises to the chloroplast thylakoid membrane. Functionally, component of the cytochrome b6-f complex, which mediates electron transfer between photosystem II (PSII) and photosystem I (PSI), cyclic electron flow around PSI, and state transitions. The chain is Cytochrome b6 from Morus indica (Mulberry).